Reading from the N-terminus, the 251-residue chain is Imidazole glycerol phosphate synthase subunit HisF (251 aa).

Residues aspartate 11 and aspartate 130 contribute to the active site.

It belongs to the HisA/HisF family. Heterodimer of HisH and HisF.

The protein resides in the cytoplasm. The enzyme catalyses 5-[(5-phospho-1-deoxy-D-ribulos-1-ylimino)methylamino]-1-(5-phospho-beta-D-ribosyl)imidazole-4-carboxamide + L-glutamine = D-erythro-1-(imidazol-4-yl)glycerol 3-phosphate + 5-amino-1-(5-phospho-beta-D-ribosyl)imidazole-4-carboxamide + L-glutamate + H(+). Its pathway is amino-acid biosynthesis; L-histidine biosynthesis; L-histidine from 5-phospho-alpha-D-ribose 1-diphosphate: step 5/9. In terms of biological role, IGPS catalyzes the conversion of PRFAR and glutamine to IGP, AICAR and glutamate. The HisF subunit catalyzes the cyclization activity that produces IGP and AICAR from PRFAR using the ammonia provided by the HisH subunit. This chain is Imidazole glycerol phosphate synthase subunit HisF, found in Parabacteroides distasonis (strain ATCC 8503 / DSM 20701 / CIP 104284 / JCM 5825 / NCTC 11152).